Here is a 581-residue protein sequence, read N- to C-terminus: MRLFNQLKWYFIKEWKRYLGSIILLIIIAFLQLLPPKIIGILIDLIIKEKMSGFEILPWISIILLIAIIVYILRYLWRILLFGASYQLATELRVKFYSYLSKQSEIFFLKNRTGDLIARATNDVDRVVFAAGEGVLTLVDSSVMGISVLIVMITQISWLLTIISLIPMPIMAILIKKYGKKLHDTFRNAQSAFSLLNNQTQEILTSIRMIRAFGLEKNQLKKFNNIVNDTGKKNMEVAEIDARFDPVIYLSVAFSNLLAITAGGWLVWNNTITIGKLTSFIMYLGLMIWPMLALAWMFNIVERGSAAWDRIHSIINQNLYIEDGKKTIINMNGKLNINIDMFFYPKNKKPSLKNIYLSLNPGKTLGICGPTGAGKSTLLKLIQRQFKIHKGEILYNSSSLLELKIDYWRSKIGVVNQTSFLFSDSISNNISLGKPKASQKEIEKAAKLADIHKDIVCLPQGYNTQVGERGVMLSGGQKQRIAIARALLLNTEILILDDALSAVDGKTENNILKNLKKWKDKGYSLIIVAHRLSALIHADEIIVIKEGTIIQRGNHEKLIKEKNWYKSMYDHQKIQTEIENF.

Residues 18–303 form the ABC transmembrane type-1 domain; that stretch reads YLGSIILLII…LAWMFNIVER (286 aa). A run of 6 helical transmembrane segments spans residues 23-43, 53-73, 127-149, 153-175, 247-267, and 280-300; these read ILLI…GILI, GFEI…VYIL, VVFA…ISVL, ITQI…AILI, VIYL…GWLV, and FIMY…MFNI. The 235-residue stretch at 337-571 folds into the ABC transporter domain; the sequence is INIDMFFYPK…KNWYKSMYDH (235 aa). 369-376 contributes to the ATP binding site; the sequence is GPTGAGKS.

This sequence belongs to the ABC transporter superfamily. Drug exporter-2 (TC 3.A.1.117) family.

It localises to the cell membrane. It catalyses the reaction ATP + H2O + xenobioticSide 1 = ADP + phosphate + xenobioticSide 2.. The chain is Multidrug resistance-like ATP-binding protein MdlA (mdlA) from Buchnera aphidicola subsp. Schizaphis graminum (strain Sg).